Reading from the N-terminus, the 326-residue chain is Porphobilinogen deaminase (326 aa).

Cys251 carries the post-translational modification S-(dipyrrolylmethanemethyl)cysteine.

It belongs to the HMBS family. Dipyrromethane is required as a cofactor.

The enzyme catalyses 4 porphobilinogen + H2O = hydroxymethylbilane + 4 NH4(+). The protein operates within porphyrin-containing compound metabolism; protoporphyrin-IX biosynthesis; coproporphyrinogen-III from 5-aminolevulinate: step 2/4. In terms of biological role, tetrapolymerization of the monopyrrole PBG into the hydroxymethylbilane pre-uroporphyrinogen in several discrete steps. This chain is Porphobilinogen deaminase (HEM3), found in Eremothecium gossypii (strain ATCC 10895 / CBS 109.51 / FGSC 9923 / NRRL Y-1056) (Yeast).